The following is a 189-amino-acid chain: Elongation factor P (189 aa).

It belongs to the elongation factor P family.

It is found in the cytoplasm. Its pathway is protein biosynthesis; polypeptide chain elongation. Involved in peptide bond synthesis. Stimulates efficient translation and peptide-bond synthesis on native or reconstituted 70S ribosomes in vitro. Probably functions indirectly by altering the affinity of the ribosome for aminoacyl-tRNA, thus increasing their reactivity as acceptors for peptidyl transferase. In Ehrlichia ruminantium (strain Gardel), this protein is Elongation factor P.